We begin with the raw amino-acid sequence, 202 residues long: Imidazoleglycerol-phosphate dehydratase (202 aa).

This sequence belongs to the imidazoleglycerol-phosphate dehydratase family.

The protein localises to the cytoplasm. It catalyses the reaction D-erythro-1-(imidazol-4-yl)glycerol 3-phosphate = 3-(imidazol-4-yl)-2-oxopropyl phosphate + H2O. It participates in amino-acid biosynthesis; L-histidine biosynthesis; L-histidine from 5-phospho-alpha-D-ribose 1-diphosphate: step 6/9. This chain is Imidazoleglycerol-phosphate dehydratase, found in Synechococcus sp. (strain CC9605).